We begin with the raw amino-acid sequence, 508 residues long: Maturase K (508 aa).

This sequence belongs to the intron maturase 2 family. MatK subfamily.

The protein resides in the plastid. Its subcellular location is the chloroplast. In terms of biological role, usually encoded in the trnK tRNA gene intron. Probably assists in splicing its own and other chloroplast group II introns. The sequence is that of Maturase K from Gordonia lasianthus (Loblolly bay).